Consider the following 396-residue polypeptide: Elongation factor Tu (396 aa).

The tr-type G domain occupies 10–205 (KSHANIGTIG…AVDEYIPTPE (196 aa)). The tract at residues 19–26 (GHVDHGKT) is G1. 19–26 (GHVDHGKT) provides a ligand contact to GTP. Threonine 26 contacts Mg(2+). The interval 61–65 (GITIS) is G2. Positions 82 to 85 (DCPG) are G3. GTP-binding positions include 82 to 86 (DCPGH) and 137 to 140 (NKCD). Positions 137–140 (NKCD) are G4. Residues 175 to 177 (SAL) are G5. Threonine 385 bears the Phosphothreonine mark.

The protein belongs to the TRAFAC class translation factor GTPase superfamily. Classic translation factor GTPase family. EF-Tu/EF-1A subfamily. In terms of assembly, monomer. Interacts with BrxC. Post-translationally, phosphorylated on Thr-385 in vitro by PrkC in the presence of poly-L-lysine or myelin basic protein, dephosphorylated by PrpC.

The protein resides in the cytoplasm. It catalyses the reaction GTP + H2O = GDP + phosphate + H(+). GTP hydrolase that promotes the GTP-dependent binding of aminoacyl-tRNA to the A-site of ribosomes during protein biosynthesis. This Bacillus subtilis (strain 168) protein is Elongation factor Tu.